A 260-amino-acid chain; its full sequence is Transforming acid coiled-coil-containing protein 1 (260 aa).

Residues 1-43 form a disordered region; sequence MSLNTTFTKEDGTEVVIPFNGSQNGHPENEEPEVEEAAEPSSS. A coiled-coil region spans residues 108 to 249; that stretch reads ASSEELEKAL…CDQLLNDVDV (142 aa).

Belongs to the TACC family. In terms of assembly, interacts with zyg-9 to form a heterodimer. Interacts with zyg-8 to form a heterodimer. Interacts with efa-6 (via N-terminus). Expressed in touch neurons.

It is found in the cytoplasm. It localises to the cytoskeleton. The protein localises to the spindle pole. The protein resides in the microtubule organizing center. Its subcellular location is the centrosome. It is found in the chromosome. It localises to the centromere. The protein localises to the kinetochore. The protein resides in the cell projection. Its subcellular location is the axon. It is found in the perikaryon. Involved in microtubule formation, polymerization and assembly, regulating microtubule nucleation and length. Plays a role in pronuclear migration and mitotic and meiotic spindle elongation during early embryogenesis. In complex with zyg-9, functions during the early stages of embryonic development to regulate microtubule assembly throughout the cell cycle. Specifically, the complex is required for the formation and growth of astral microtubules and spindle microtubules during mitotic spindle assembly. At anaphase, the complex is required for mitotic spindle positioning in one-cell stage embryos. The complex acts in a partially redundant manner with the tac-1/zyg-8 complex to regulate microtubule assembly and processes during interphase, mitosis and meiosis in embryos. Plays a role in injury-induced axonal regrowth, regeneration and microtubule stability in PLM neurons and this may be downstream of efa-6. The chain is Transforming acid coiled-coil-containing protein 1 from Caenorhabditis elegans.